The sequence spans 284 residues: Undecaprenyl-diphosphatase (284 aa).

The next 8 helical transmembrane spans lie at 7-27 (IILG…TGHL), 44-64 (EMFD…LYFH), 90-110 (LWLK…PLND), 116-136 (FYHF…FIVI), 167-187 (VLSL…ALLI), 197-217 (FTFF…ILHF), 229-249 (FGVL…AIKF), and 259-279 (FTFF…YAAF).

This sequence belongs to the UppP family.

It localises to the cell membrane. It carries out the reaction di-trans,octa-cis-undecaprenyl diphosphate + H2O = di-trans,octa-cis-undecaprenyl phosphate + phosphate + H(+). Functionally, catalyzes the dephosphorylation of undecaprenyl diphosphate (UPP). Confers resistance to bacitracin. This chain is Undecaprenyl-diphosphatase, found in Lactococcus lactis subsp. cremoris (strain SK11).